Consider the following 220-residue polypeptide: Ribose-5-phosphate isomerase A (220 aa).

Substrate-binding positions include 28-31 (TGST), 81-84 (DGAD), and 94-97 (KGGG). Residue Glu103 is the Proton acceptor of the active site. Lys121 contacts substrate.

The protein belongs to the ribose 5-phosphate isomerase family. As to quaternary structure, homodimer.

It catalyses the reaction aldehydo-D-ribose 5-phosphate = D-ribulose 5-phosphate. It functions in the pathway carbohydrate degradation; pentose phosphate pathway; D-ribose 5-phosphate from D-ribulose 5-phosphate (non-oxidative stage): step 1/1. In terms of biological role, catalyzes the reversible conversion of ribose-5-phosphate to ribulose 5-phosphate. The protein is Ribose-5-phosphate isomerase A of Hydrogenovibrio crunogenus (strain DSM 25203 / XCL-2) (Thiomicrospira crunogena).